The chain runs to 268 residues: Secreted RxLR effector protein 32 (268 aa).

The first 21 residues, 1 to 21, serve as a signal peptide directing secretion; it reads MRGAYYVAFALLVAASTRTAA. A RxLR-dEER motif is present at residues 50–71; it reads RILRESPDPKDRLPVYASDEER. Positions 120 to 257 are disordered; it reads PKLEIKKSKR…PTPESLGIGG (138 aa). A compositionally biased stretch (low complexity) spans 148–161; sequence SNSKKSLVSSASAK. The segment covering 212–224 has biased composition (basic and acidic residues); that stretch reads NLDKNKRPDEAKI.

The protein belongs to the RxLR effector family.

It is found in the secreted. The protein localises to the host cell. Its function is as follows. Secreted effector that completely suppresses the host cell death induced by cell death-inducing proteins. The protein is Secreted RxLR effector protein 32 of Plasmopara viticola (Downy mildew of grapevine).